The following is a 388-amino-acid chain: Succinate--CoA ligase [ADP-forming] subunit beta (388 aa).

The 237-residue stretch at 9–245 (KELLASYGLP…KSQENERELK (237 aa)) folds into the ATP-grasp domain. ATP is bound by residues Lys46, 53 to 55 (GRG), Glu100, Tyr103, and Glu108. Residues Asn200 and Asp214 each contribute to the Mg(2+) site. Substrate is bound by residues Asn265 and 322–324 (GIV).

It belongs to the succinate/malate CoA ligase beta subunit family. Heterotetramer of two alpha and two beta subunits. Requires Mg(2+) as cofactor.

The catalysed reaction is succinate + ATP + CoA = succinyl-CoA + ADP + phosphate. It carries out the reaction GTP + succinate + CoA = succinyl-CoA + GDP + phosphate. Its pathway is carbohydrate metabolism; tricarboxylic acid cycle; succinate from succinyl-CoA (ligase route): step 1/1. Functionally, succinyl-CoA synthetase functions in the citric acid cycle (TCA), coupling the hydrolysis of succinyl-CoA to the synthesis of either ATP or GTP and thus represents the only step of substrate-level phosphorylation in the TCA. The beta subunit provides nucleotide specificity of the enzyme and binds the substrate succinate, while the binding sites for coenzyme A and phosphate are found in the alpha subunit. This Neisseria meningitidis serogroup B (strain ATCC BAA-335 / MC58) protein is Succinate--CoA ligase [ADP-forming] subunit beta.